A 930-amino-acid polypeptide reads, in one-letter code: Polypeptide N-acetylgalactosaminyltransferase 5 (930 aa).

Over 1 to 12 (MNKIRKFFRGSG) the chain is Cytoplasmic. Residues 13–35 (RVLAFIFVASVIWLLFDMAALRL) form a helical; Signal-anchor for type II membrane protein membrane-spanning segment. At 36-930 (SFSEINTGIL…KWKFEKYYDV (895 aa)) the chain is on the lumenal side. Positions 163-210 (GSEKDSFTVSRGVPLNKTAEHTETLDKKQEAPENYNLSSDTSKQASQR) are disordered. N178 carries an N-linked (GlcNAc...) asparagine glycan. Residues 180–193 (TAEHTETLDKKQEA) show a composition bias toward basic and acidic residues. Over residues 197–210 (YNLSSDTSKQASQR) the composition is skewed to polar residues. 2 N-linked (GlcNAc...) asparagine glycosylation sites follow: N198 and N213. S285 carries the post-translational modification Phosphoserine. N287 and N309 each carry an N-linked (GlcNAc...) asparagine glycan. The tract at residues 344–377 (LGESQGKHIPRSQSQTLSSPLAPKRAVSQSKPTL) is disordered. 2 N-linked (GlcNAc...) asparagine glycosylation sites follow: N387 and N403. 3 cysteine pairs are disulfide-bonded: C476/C708, C699/C779, and C812/C825. Positions 485–594 (LPTTSIIMCF…VGWLEPLLER (110 aa)) are catalytic subdomain A. Residues D526 and R555 each contribute to the substrate site. Residue N568 is glycosylated (N-linked (GlcNAc...) asparagine). D578 is a Mn(2+) binding site. Residue S579 participates in substrate binding. H580 provides a ligand contact to Mn(2+). Residues 654 to 716 (IIRCPVMAGG…PCSRVGHIFR (63 aa)) are catalytic subdomain B. Residue W685 participates in substrate binding. H713 lines the Mn(2+) pocket. The substrate site is built by R716 and Y721. N-linked (GlcNAc...) asparagine glycans are attached at residues N766, N817, and N835. Residues 794-925 (KAPVVRASGV…TEPQQKWKFE (132 aa)) form the Ricin B-type lectin domain. 2 disulfide bridges follow: C848-C863 and C898-C913. An N-linked (GlcNAc...) asparagine glycan is attached at N902.

This sequence belongs to the glycosyltransferase 2 family. GalNAc-T subfamily. As to quaternary structure, interacts with EXT2. Does not interact with EXT1, EXTL1 or EXTL3. The cofactor is Mn(2+). In terms of tissue distribution, predominantly expressed in sublingual gland. Expressed at lower level in stomach and small intestine. Weakly or not expressed in submandibular gland, parotid gland, kidney, liver, heart, brain, spleen, lung, skeletal muscle, testis, ovary, cervix and uterus.

Its subcellular location is the golgi apparatus membrane. It carries out the reaction L-seryl-[protein] + UDP-N-acetyl-alpha-D-galactosamine = a 3-O-[N-acetyl-alpha-D-galactosaminyl]-L-seryl-[protein] + UDP + H(+). The catalysed reaction is L-threonyl-[protein] + UDP-N-acetyl-alpha-D-galactosamine = a 3-O-[N-acetyl-alpha-D-galactosaminyl]-L-threonyl-[protein] + UDP + H(+). The protein operates within protein modification; protein glycosylation. Catalyzes the initial reaction in O-linked oligosaccharide biosynthesis, the transfer of an N-acetyl-D-galactosamine residue to a serine or threonine residue on the protein receptor. Has activity toward EA2 peptide substrate, but has a weak activity toward Muc2, Muc1b, rMuc-2 or mG-Muc substrates. The sequence is that of Polypeptide N-acetylgalactosaminyltransferase 5 (Galnt5) from Rattus norvegicus (Rat).